Reading from the N-terminus, the 196-residue chain is Nucleoid occlusion factor SlmA (196 aa).

The region spanning 7–68 is the HTH tetR-type domain; the sequence is SNRREEILQA…GLIEFIEEAL (62 aa). Positions 31–50 form a DNA-binding region, H-T-H motif; it reads TTAKLAQQVGVSEAALYRHF. Positions 65–142 form a coiled coil; sequence EEALMSRINR…QLRQILRERK (78 aa).

Belongs to the nucleoid occlusion factor SlmA family. In terms of assembly, homodimer. Interacts with FtsZ.

The protein localises to the cytoplasm. The protein resides in the nucleoid. Functionally, required for nucleoid occlusion (NO) phenomenon, which prevents Z-ring formation and cell division over the nucleoid. Acts as a DNA-associated cell division inhibitor that binds simultaneously chromosomal DNA and FtsZ, and disrupts the assembly of FtsZ polymers. SlmA-DNA-binding sequences (SBS) are dispersed on non-Ter regions of the chromosome, preventing FtsZ polymerization at these regions. This Vibrio vulnificus (strain CMCP6) protein is Nucleoid occlusion factor SlmA.